Consider the following 659-residue polypeptide: Cyclic-di-AMP phosphodiesterase GdpP (659 aa).

The Cytoplasmic segment spans residues 1 to 8 (MPSFYEKP). Helical transmembrane passes span 9-29 (LFRYPIYALIALSIITILISF) and 30-50 (YFNWILGTVEVLLLAVILFFI). The Cytoplasmic portion of the chain corresponds to 51–659 (KRADSLIRQE…DEYFEGGVQR (609 aa)). Residues 84-149 (PIGIMLFNDQ…NDRKFRVVIK (66 aa)) form a PAS-like domain, required for heme-binding region. The GGDEF domain maps to 173 to 301 (ERTVLAYIFL…GGDQVAIKLP (129 aa)). The tract at residues 339–496 (NVIIMGHKFP…IEATALLAGI (158 aa)) is DHH domain. Positions 345, 349, 351, 420, 444, and 499 each coordinate Mn(2+). Positions 591-646 (FAVARRDEQTVCISARSLGEVNVQIIMEALEGGGHLTNAATQLSGISVSEALERLK) are DHHA1 domain.

Belongs to the GdpP/PdeA phosphodiesterase family. Heme b serves as cofactor. The cofactor is Mg(2+). Mn(2+) is required as a cofactor.

Its subcellular location is the cell membrane. The catalysed reaction is 3',3'-c-di-AMP + H2O = 5'-O-phosphonoadenylyl-(3'-&gt;5')-adenosine + H(+). Its activity is regulated as follows. Phosphodiesterase (PDE) inhibited by Zn(2+), Ca(2+) inhibits in the presence of Mg(2+) but not Mn(2+); c-di-AMP PDE activity is competitively inhibited by ppGpp. Heme binding (by Fe(2+) or Fe(3+) heme) inhibits PDE, activity is partially restored by KCN or NO only for Fe(2+) heme. Binding of NO to Fe(2+) heme switches from hexa- to pentacoordination. Heme binding inhibits the ATPase activity. Functionally, has phosphodiesterase (PDE) activity against cyclic-di-AMP (c-di-AMP) and to a much lesser extent against cyclic-di-GMP (c-di-GMP) in the DHH/DHHA1 domains. Also has ATPase activity, probably via the GGDEF domain. Overexpression leads to increased sensitivity to methyl methanesulfonate (MMS) and H(2)O(2). Overexpression leads to extreme sensitivity to the beta-lactam antibiotic cefuroxime (CEF), probably dependent on PDE activity. May monitor cellular heme or NO levels. In B.subtilis c-di-AMP is a second messenger that mediates growth, DNA repair and cell wall homeostasis; it is toxic when present in excess. This chain is Cyclic-di-AMP phosphodiesterase GdpP, found in Bacillus subtilis (strain 168).